Consider the following 171-residue polypeptide: Shikimate kinase (171 aa).

Residue 14–19 coordinates ATP; sequence GAGKST. Mg(2+) is bound at residue serine 18. The substrate site is built by aspartate 36, arginine 60, and glycine 82. Arginine 120 contributes to the ATP binding site. Arginine 139 contacts substrate. Glutamine 156 contacts ATP.

It belongs to the shikimate kinase family. As to quaternary structure, monomer. Mg(2+) serves as cofactor.

Its subcellular location is the cytoplasm. The catalysed reaction is shikimate + ATP = 3-phosphoshikimate + ADP + H(+). The protein operates within metabolic intermediate biosynthesis; chorismate biosynthesis; chorismate from D-erythrose 4-phosphate and phosphoenolpyruvate: step 5/7. Functionally, catalyzes the specific phosphorylation of the 3-hydroxyl group of shikimic acid using ATP as a cosubstrate. The chain is Shikimate kinase from Shewanella sediminis (strain HAW-EB3).